A 151-amino-acid polypeptide reads, in one-letter code: UPF0178 protein mma_0312 (151 aa).

This sequence belongs to the UPF0178 family.

This is UPF0178 protein mma_0312 from Janthinobacterium sp. (strain Marseille) (Minibacterium massiliensis).